The primary structure comprises 289 residues: ATP synthase gamma chain (289 aa).

Belongs to the ATPase gamma chain family. F-type ATPases have 2 components, CF(1) - the catalytic core - and CF(0) - the membrane proton channel. CF(1) has five subunits: alpha(3), beta(3), gamma(1), delta(1), epsilon(1). CF(0) has three main subunits: a, b and c.

It localises to the cell inner membrane. In terms of biological role, produces ATP from ADP in the presence of a proton gradient across the membrane. The gamma chain is believed to be important in regulating ATPase activity and the flow of protons through the CF(0) complex. This Janthinobacterium sp. (strain Marseille) (Minibacterium massiliensis) protein is ATP synthase gamma chain.